The primary structure comprises 377 residues: Succinyl-diaminopimelate desuccinylase (377 aa).

Histidine 67 is a binding site for Zn(2+). Residue aspartate 69 is part of the active site. Aspartate 100 serves as a coordination point for Zn(2+). The Proton acceptor role is filled by glutamate 134. Zn(2+)-binding residues include glutamate 135, glutamate 163, and histidine 349.

The protein belongs to the peptidase M20A family. DapE subfamily. Homodimer. Zn(2+) is required as a cofactor. Requires Co(2+) as cofactor.

The enzyme catalyses N-succinyl-(2S,6S)-2,6-diaminopimelate + H2O = (2S,6S)-2,6-diaminopimelate + succinate. The protein operates within amino-acid biosynthesis; L-lysine biosynthesis via DAP pathway; LL-2,6-diaminopimelate from (S)-tetrahydrodipicolinate (succinylase route): step 3/3. Functionally, catalyzes the hydrolysis of N-succinyl-L,L-diaminopimelic acid (SDAP), forming succinate and LL-2,6-diaminopimelate (DAP), an intermediate involved in the bacterial biosynthesis of lysine and meso-diaminopimelic acid, an essential component of bacterial cell walls. The sequence is that of Succinyl-diaminopimelate desuccinylase from Actinobacillus pleuropneumoniae serotype 3 (strain JL03).